The primary structure comprises 307 residues: Dihydroorotate dehydrogenase A (fumarate) (307 aa).

FMN contacts are provided by residues serine 21 and 46 to 47; that span reads KT. Residues lysine 46, 70–74, and asparagine 130 each bind substrate; that span reads NSVGL. Asparagine 130 provides a ligand contact to FMN. The active-site Nucleophile is the cysteine 133. Residues lysine 168 and isoleucine 194 each coordinate FMN. 195-196 provides a ligand contact to substrate; that stretch reads NT. FMN-binding positions include glycine 220, 246-247, and 268-269; these read GG and GS.

It belongs to the dihydroorotate dehydrogenase family. Type 1 subfamily. As to quaternary structure, homodimer. FMN is required as a cofactor.

Its subcellular location is the cytoplasm. It catalyses the reaction (S)-dihydroorotate + fumarate = orotate + succinate. Its pathway is pyrimidine metabolism; UMP biosynthesis via de novo pathway. In terms of biological role, catalyzes the conversion of dihydroorotate to orotate with fumarate as the electron acceptor. This Lactobacillus delbrueckii subsp. bulgaricus (strain ATCC BAA-365 / Lb-18) protein is Dihydroorotate dehydrogenase A (fumarate) (pyrD).